The chain runs to 709 residues: Leucine-rich repeat-containing protein 4B (709 aa).

The first 38 residues, 1–38, serve as a signal peptide directing secretion; the sequence is MAQAHIQGSPCPLLPPGRMSWPQGALLLLWLFSPPLRA. Residues 50-88 form the LRRNT domain; it reads GGGSPPATSCPAACSCSNQASRVICTRRELAEVPASIPV. LRR repeat units follow at residues 89 to 110, 113 to 134, 137 to 158, 161 to 182, 185 to 207, 210 to 231, 232 to 253, 256 to 277, and 280 to 301; these read NTRY…TFKH, HLEI…AFNG, SLNT…AFEY, KLRE…AFNR, SLRR…AFEG, NLRY…TALV, RLEE…SFQG, SLRK…AFDD, and SLEE…LFTP. The LRRCT domain occupies 313–365; it reads NPWHCNCDVLWLSWWLKETVPSNTTCCARCHAPAGLKGRYIGELDQSHFTCYA. The Ig-like C2-type domain occupies 366–454; the sequence is PVIVEPPTDL…GNTTASATLN (89 aa). N-linked (GlcNAc...) asparagine glycans are attached at residues Asn-376, Asn-402, Asn-424, Asn-427, and Asn-446. Cys-387 and Cys-438 are disulfide-bonded. The tract at residues 496-552 is disordered; the sequence is TQPGEEAQQPRGTEKEPPGPTTDGAWGGGRPDAAAPASASTTAPAPRSSRPTEKAFT. Over residues 528–544 the composition is skewed to low complexity; sequence AAAPASASTTAPAPRSS. A helical membrane pass occupies residues 575–595; that stretch reads IIIGCFVAITFMAAVMLVAFY. Ser-689 carries the post-translational modification Phosphoserine.

Interacts with PTPRF. Interacts with DLG4. In terms of processing, N-glycosylated. O-glycosylated; contains sialic acid. In terms of tissue distribution, mainly expressed in the brain. Widespread distribution in various brain regions (at protein level). Detected both embryonically and postnatally with stronger expression in postnatal stages.

Its subcellular location is the membrane. It localises to the presynaptic cell membrane. Its function is as follows. Synaptic adhesion protein. Regulates the formation of excitatory synapses. The trans-synaptic adhesion between LRRC4B and PTPRF regulates the formation of excitatory synapses in a bidirectional manner. The protein is Leucine-rich repeat-containing protein 4B (Lrrc4b) of Rattus norvegicus (Rat).